A 75-amino-acid chain; its full sequence is Large ribosomal subunit protein bL28 (75 aa).

It belongs to the bacterial ribosomal protein bL28 family.

This is Large ribosomal subunit protein bL28 from Buchnera aphidicola subsp. Acyrthosiphon pisum (strain APS) (Acyrthosiphon pisum symbiotic bacterium).